The sequence spans 348 residues: Dihydroorotase (348 aa).

Zn(2+) is bound by residues His-17 and His-19. Substrate contacts are provided by residues His-19–Arg-21 and Asn-45. Zn(2+) contacts are provided by Lys-103, His-140, and His-178. Lys-103 is modified (N6-carboxylysine). His-140 serves as a coordination point for substrate. Leu-223 contacts substrate. Position 251 (Asp-251) interacts with Zn(2+). Asp-251 is a catalytic residue. Substrate contacts are provided by His-255 and Ala-267.

It belongs to the metallo-dependent hydrolases superfamily. DHOase family. Class II DHOase subfamily. As to quaternary structure, homodimer. It depends on Zn(2+) as a cofactor.

The enzyme catalyses (S)-dihydroorotate + H2O = N-carbamoyl-L-aspartate + H(+). It functions in the pathway pyrimidine metabolism; UMP biosynthesis via de novo pathway; (S)-dihydroorotate from bicarbonate: step 3/3. Its function is as follows. Catalyzes the reversible cyclization of carbamoyl aspartate to dihydroorotate. The sequence is that of Dihydroorotase from Salmonella typhi.